Reading from the N-terminus, the 130-residue chain is D-ribose pyranase (130 aa).

Histidine 20 acts as the Proton donor in catalysis. Substrate is bound by residues aspartate 28, histidine 97, and 119–121 (YAN).

It belongs to the RbsD / FucU family. RbsD subfamily. In terms of assembly, homodecamer.

It localises to the cytoplasm. The enzyme catalyses beta-D-ribopyranose = beta-D-ribofuranose. The protein operates within carbohydrate metabolism; D-ribose degradation; D-ribose 5-phosphate from beta-D-ribopyranose: step 1/2. In terms of biological role, catalyzes the interconversion of beta-pyran and beta-furan forms of D-ribose. The polypeptide is D-ribose pyranase (Paracidovorax citrulli (strain AAC00-1) (Acidovorax citrulli)).